Consider the following 123-residue polypeptide: Small ribosomal subunit protein uS13 (123 aa).

Positions 94–123 are disordered; it reads AGLPVRGQRTKTNARTRKGPKKTVGVQRKK. Basic residues predominate over residues 101 to 123; the sequence is QRTKTNARTRKGPKKTVGVQRKK.

Belongs to the universal ribosomal protein uS13 family. In terms of assembly, part of the 30S ribosomal subunit. Forms a loose heterodimer with protein S19. Forms two bridges to the 50S subunit in the 70S ribosome.

Functionally, located at the top of the head of the 30S subunit, it contacts several helices of the 16S rRNA. In the 70S ribosome it contacts the 23S rRNA (bridge B1a) and protein L5 of the 50S subunit (bridge B1b), connecting the 2 subunits; these bridges are implicated in subunit movement. Contacts the tRNAs in the A and P-sites. In Acetivibrio thermocellus (strain ATCC 27405 / DSM 1237 / JCM 9322 / NBRC 103400 / NCIMB 10682 / NRRL B-4536 / VPI 7372) (Clostridium thermocellum), this protein is Small ribosomal subunit protein uS13.